The chain runs to 283 residues: Pantothenate synthetase (283 aa).

30-37 serves as a coordination point for ATP; the sequence is MGNLHAGH. The active-site Proton donor is His-37. Residue Gln-61 coordinates (R)-pantoate. Gln-61 contributes to the beta-alanine binding site. Residue 149-152 participates in ATP binding; sequence GEKD. Gln-155 is a binding site for (R)-pantoate. Residues Val-178 and 186–189 each bind ATP; that span reads LSSR.

The protein belongs to the pantothenate synthetase family. As to quaternary structure, homodimer.

Its subcellular location is the cytoplasm. It carries out the reaction (R)-pantoate + beta-alanine + ATP = (R)-pantothenate + AMP + diphosphate + H(+). Its pathway is cofactor biosynthesis; (R)-pantothenate biosynthesis; (R)-pantothenate from (R)-pantoate and beta-alanine: step 1/1. Catalyzes the condensation of pantoate with beta-alanine in an ATP-dependent reaction via a pantoyl-adenylate intermediate. The protein is Pantothenate synthetase of Azotobacter vinelandii (strain DJ / ATCC BAA-1303).